The following is a 27-amino-acid chain: Flagellar filament 34 kDa core protein (27 aa).

The protein belongs to the bacterial flagellin family. The flagellum consists of an outer layer composed of repeating units of FlaA around a core that contains one or all of five antigenically related polypeptides.

Its subcellular location is the periplasmic flagellum. It is found in the periplasm. Functionally, component of the core of the flagella. The chain is Flagellar filament 34 kDa core protein from Spirochaeta aurantia.